The following is a 158-amino-acid chain: NAD(P)H-quinone oxidoreductase subunit J, chloroplastic (158 aa).

Belongs to the complex I 30 kDa subunit family. NDH is composed of at least 16 different subunits, 5 of which are encoded in the nucleus.

The protein resides in the plastid. It is found in the chloroplast thylakoid membrane. It catalyses the reaction a plastoquinone + NADH + (n+1) H(+)(in) = a plastoquinol + NAD(+) + n H(+)(out). It carries out the reaction a plastoquinone + NADPH + (n+1) H(+)(in) = a plastoquinol + NADP(+) + n H(+)(out). In terms of biological role, NDH shuttles electrons from NAD(P)H:plastoquinone, via FMN and iron-sulfur (Fe-S) centers, to quinones in the photosynthetic chain and possibly in a chloroplast respiratory chain. The immediate electron acceptor for the enzyme in this species is believed to be plastoquinone. Couples the redox reaction to proton translocation, and thus conserves the redox energy in a proton gradient. This chain is NAD(P)H-quinone oxidoreductase subunit J, chloroplastic, found in Cucumis sativus (Cucumber).